The primary structure comprises 61 residues: Small ribosomal subunit protein eS30A (61 aa).

The interval Met-1–Lys-36 is disordered.

It belongs to the eukaryotic ribosomal protein eS30 family. Component of the small ribosomal subunit (SSU). Mature yeast ribosomes consist of a small (40S) and a large (60S) subunit. The 40S small subunit contains 1 molecule of ribosomal RNA (18S rRNA) and at least 33 different proteins. The large 60S subunit contains 3 rRNA molecules (25S, 5.8S and 5S rRNA) and at least 46 different proteins.

It is found in the cytoplasm. The protein resides in the nucleus. Functionally, component of the ribosome, a large ribonucleoprotein complex responsible for the synthesis of proteins in the cell. The small ribosomal subunit (SSU) binds messenger RNAs (mRNAs) and translates the encoded message by selecting cognate aminoacyl-transfer RNA (tRNA) molecules. The large subunit (LSU) contains the ribosomal catalytic site termed the peptidyl transferase center (PTC), which catalyzes the formation of peptide bonds, thereby polymerizing the amino acids delivered by tRNAs into a polypeptide chain. The nascent polypeptides leave the ribosome through a tunnel in the LSU and interact with protein factors that function in enzymatic processing, targeting, and the membrane insertion of nascent chains at the exit of the ribosomal tunnel. This Schizosaccharomyces pombe (strain 972 / ATCC 24843) (Fission yeast) protein is Small ribosomal subunit protein eS30A (rps3001).